The chain runs to 198 residues: Suppressor of cytokine signaling 2 (198 aa).

A disordered region spans residues Met1–Pro31. The segment at Met1–Ser75 is interaction with AREL1. Over residues Glu14–Ser25 the composition is skewed to polar residues. Phosphoserine is present on residues Ser30 and Ser52. The SH2 domain occupies Trp48–Leu156. Residues Tyr151–Gln197 enclose the SOCS box domain. Residue Lys173 forms a Glycyl lysine isopeptide (Lys-Gly) (interchain with G-Cter in ubiquitin) linkage.

In terms of assembly, substrate-recognition component of the ECS(SOCS2) complex, composed of SOCS2, CUL5, ELOB, ELOC and RNF7/RBX2. Interacts with IGF1R. Interacts with DCUN1D1. In terms of processing, ubiquitinated; mediated by AREL1 and leading to its subsequent proteasomal degradation. Ubiquitination is dependent on its phosphorylation at Ser-52, by PKC. Ubiquitination is stimulated by LPS. Phosphorylation at Ser-52 by PKC facilitates its ubiquitination and proteasomal degradation.

Its subcellular location is the cytoplasm. It functions in the pathway protein modification; protein ubiquitination. Functionally, substrate-recognition component of a cullin-5-RING E3 ubiquitin-protein ligase complex (ECS complex, also named CRL5 complex), which mediates the ubiquitination and subsequent proteasomal degradation of target proteins, such as EPOR and GHR. Specifically recognizes and binds phosphorylated proteins via its SH2 domain, promoting their ubiquitination. The ECS(SOCS2) complex acts as a key regulator of growth hormone receptor (GHR) levels by mediating ubiquitination and degradation of GHR, following GHR phosphorylation by JAK2. The ECS(SOCS2) also catalyzes ubiquitination and degradation of JAK2-phosphorylated EPOR. This Sus scrofa (Pig) protein is Suppressor of cytokine signaling 2 (SOCS2).